The chain runs to 65 residues: Venom protein Vn4.6 (65 aa).

The signal sequence occupies residues 1–23 (MSKIILAIFLIVLCGLIFVTVDA).

Post-translationally, contains 2 disulfide bonds. Expressed by the venom gland.

It localises to the secreted. Its function is as follows. Endoparasitoid venom protein that interferes with the activation of host hemolymph prophenoloxidase. May act in conjunction with other venom proteins (such as Vn50), by competitive binding to the zymogen and thereby interrupting the enzyme. The sequence is that of Venom protein Vn4.6 from Cotesia rubecula (Cabbage white butterfly parasite).